A 249-amino-acid chain; its full sequence is Suppressor of silencing P0 (249 aa).

One can recognise an F-box-like domain in the interval Leu63–Leu67.

This sequence belongs to the polerovirus P0 protein family. Interacts (via F-box-like domain) with host AGO1; this interaction targets AGO1 for degradation, and thereby suppresses the silencing function of the latter. Interacts (via F-box-like domain) with host ASK1 and ASK2 (SKP proteins); these interactions are essential for viral pathogenicity. Part of a SCF P0 complex composed of P0 and the host proteins SKP and CUL1.

In terms of biological role, suppressor of RNA-mediated gene silencing, also known as post-transcriptional gene silencing (PTGS), a mechanism of plant viral defense that limits the accumulation of viral RNAs. The P0 protein suppresses local PTGS using its F-box-like domain to mediate destabilization and degradation of the AGO1 protein. The sequence is that of Suppressor of silencing P0 from Turnip yellows virus (isolate FL-1) (TuYV).